Here is a 123-residue protein sequence, read N- to C-terminus: Histone H1-like protein HC1 (123 aa).

The segment at 54 to 123 (IKAEKSGLLK…KPSKARGFRK (70 aa)) is disordered. Over residues 61 to 75 (LLKRKPSTKAPAKVK) the composition is skewed to basic residues. Positions 85 to 102 (KSSAAAAKTSKAVKASKP) are enriched in low complexity. Positions 103 to 123 (ASKKTAAKKVKKPSKARGFRK) are enriched in basic residues.

It belongs to the histone H1/H5 family. HCT subfamily.

Its function is as follows. Might have a role analogous to that of eukaryotic histone proteins. The chain is Histone H1-like protein HC1 (hctA) from Chlamydia pneumoniae (Chlamydophila pneumoniae).